We begin with the raw amino-acid sequence, 71 residues long: DNA-directed RNA polymerase subunit omega (71 aa).

Belongs to the RNA polymerase subunit omega family. The RNAP catalytic core consists of 2 alpha, 1 beta, 1 beta' and 1 omega subunit. When a sigma factor is associated with the core the holoenzyme is formed, which can initiate transcription.

The catalysed reaction is RNA(n) + a ribonucleoside 5'-triphosphate = RNA(n+1) + diphosphate. Functionally, promotes RNA polymerase assembly. Latches the N- and C-terminal regions of the beta' subunit thereby facilitating its interaction with the beta and alpha subunits. The protein is DNA-directed RNA polymerase subunit omega of Syntrophomonas wolfei subsp. wolfei (strain DSM 2245B / Goettingen).